Here is a 495-residue protein sequence, read N- to C-terminus: UDP-glycosyltransferase 73C9 (495 aa).

Position 23–26 (23–26) interacts with UDP-alpha-D-glucose; the sequence is GHMI. The active-site Proton acceptor is H24. The active-site Charge relay is D129. Residues 355–358, 373–381, and 397–398 each bind UDP-alpha-D-glucose; these read WSPQ, HCGWNSTLE, and DQ.

Belongs to the UDP-glycosyltransferase family.

Functionally, possesses very weak glucosyltransferase activity toward 2,4,5-trichlorophenol (TCP), when assayed with high concentrations of TCP. In Barbarea vulgaris (Yellow rocket), this protein is UDP-glycosyltransferase 73C9.